Consider the following 231-residue polypeptide: uncharacterized protein (231 aa).

Positions 3–119 constitute an RCK N-terminal domain; that stretch reads RADFCIIGLG…RTMGIREALI (117 aa). The RCK C-terminal domain maps to 134-221; it reads HGMETEIINL…VNQYLRYINP (88 aa).

This is an uncharacterized protein from Mycoplasma pneumoniae (strain ATCC 29342 / M129 / Subtype 1) (Mycoplasmoides pneumoniae).